A 174-amino-acid polypeptide reads, in one-letter code: NADH-ubiquinone oxidoreductase chain 6 (174 aa).

Transmembrane regions (helical) follow at residues 1–21 (MTYV…GFSS), 24–44 (SPIY…MIIL), 47–67 (GGAY…MVVF), 86–106 (FEVL…VLWV), and 151–171 (WLVV…IEIT).

It belongs to the complex I subunit 6 family. As to quaternary structure, core subunit of respiratory chain NADH dehydrogenase (Complex I) which is composed of 45 different subunits.

It localises to the mitochondrion inner membrane. It carries out the reaction a ubiquinone + NADH + 5 H(+)(in) = a ubiquinol + NAD(+) + 4 H(+)(out). Its function is as follows. Core subunit of the mitochondrial membrane respiratory chain NADH dehydrogenase (Complex I) which catalyzes electron transfer from NADH through the respiratory chain, using ubiquinone as an electron acceptor. Essential for the catalytic activity and assembly of complex I. The chain is NADH-ubiquinone oxidoreductase chain 6 (MT-ND6) from Papio hamadryas (Hamadryas baboon).